Reading from the N-terminus, the 394-residue chain is Potassium channel subfamily K member 18 (394 aa).

Over Met1–Leu31 the chain is Cytoplasmic. Residues Leu32–Phe52 form a helical membrane-spanning segment. Asn83 is a glycosylation site (N-linked (GlcNAc...) asparagine). Positions Phe114–Gly140 form an intramembrane region, pore-forming. 4 residues coordinate K(+): Thr127, Val128, Gly129, and Tyr130. The tract at residues Thr127–His132 is selectivity filter 1. Residues Phe142 to Ile162 form a helical membrane-spanning segment. Topologically, residues Gly163–Asp292 are cytoplasmic. An interaction with calcineurin region spans residues Pro210–Asp215. Residues Arg261–Pro266 are interaction with YWHAH. A phosphoserine mark is found at Ser264 and Ser276. The chain crosses the membrane as a helical span at residues Ile293 to Leu313. The pore-forming intramembrane region spans Phe326–Asp340. The selectivity filter 2 stretch occupies residues Thr335–Asp340. A helical transmembrane segment spans residues His347–Phe367. At Lys368–Trp394 the chain is on the cytoplasmic side.

The protein belongs to the two pore domain potassium channel (TC 1.A.1.8) family. As to quaternary structure, homodimer. Heterodimer with KCNK2. Heterodimer with KCNK10. Interacts with calcineurin. Interacts with YWHAH, in a phosphorylation-dependent manner. Post-translationally, phosphorylation of Ser-264 is required for the binding of 14-3-3eta/YWHAH. Calcineurin-mediated dephosphorylation of Ser-276 enhances channel activity. In terms of processing, N-glycosylated. Detected in brain cortex, cerebellum, dorsal root ganglion, spinal cord and testis. High expression in trigeminal ganglion (at protein level), also expressed in autonomic nervous system ganglia such as the stellate ganglion and paravertebral sympathetic ganglia. Expressed in all adult spinal cord and brain regions, with slightly higher expression in thalamus, hypothalamus, hippocampus and posterior corte (at protein level). In non-neuronal tissues, substantial expression found in lung and heart and weal expression in liver, testis, kidney, small intestine and spleen. Expressed in regulatory T cells (at protein level).

The protein localises to the cell membrane. It catalyses the reaction K(+)(in) = K(+)(out). Activated upon cell stimulation via Ca(2+)-mobilizing receptors, such as CHRM1/M1 muscarinic receptor and AGTR1/AT1a angiotensin receptor. Activated by volatile anesthetics, such as isoflurane and inhibited by local anesthetics such as bupivacaine and lidocaine. Inhibited by extracellular acidic pH. Inhibited by Zn(2+) ions. Inhibited by hydroxy-alpha-sanshool, an ingredient of Schezuan pepper. Inhibited by Ba(2+) ions. Its function is as follows. K(+) channel that conducts outward and inward rectifying currents at depolarized and hyperpolarized membrane potentials, respectively. The outward rectifying currents are voltage-dependent, coupled to K(+) electrochemical gradient across the membrane, whereas the inward currents can be induced in response to activation of Ca(2+)-mobilizing receptors. Homo- and heterodimerizes to form functional channels with distinct regulatory and gating properties. In trigeminal ganglia sensory neurons, the heterodimers of KCNK18/TRESK and KCNK2/TREK-1 or KCNK10/TREK-2 inhibit neuronal firing and neurogenic inflammation by stabilizing the resting membrane potential at K(+) equilibrium potential as well as by regulating the threshold of action potentials and the spike frequency. In thymocytes, conducts K(+) currents upon T cell receptor (TCR) signaling leading to sustained Ca(2+) influx and NF-kappa-B activation, FOXP3 transcription and positive selection of regulatory T cell (Treg) progenitor subsets. Appears to mediate the analgesics effects of hydroxy-alpha-sanshool, a metabolite naturally present in Schezuan pepper and other Xanthoxylum plants. This chain is Potassium channel subfamily K member 18, found in Mus musculus (Mouse).